A 205-amino-acid polypeptide reads, in one-letter code: N-(5'-phosphoribosyl)anthranilate isomerase (205 aa).

This sequence belongs to the TrpF family.

It catalyses the reaction N-(5-phospho-beta-D-ribosyl)anthranilate = 1-(2-carboxyphenylamino)-1-deoxy-D-ribulose 5-phosphate. It functions in the pathway amino-acid biosynthesis; L-tryptophan biosynthesis; L-tryptophan from chorismate: step 3/5. The polypeptide is N-(5'-phosphoribosyl)anthranilate isomerase (Trichlorobacter lovleyi (strain ATCC BAA-1151 / DSM 17278 / SZ) (Geobacter lovleyi)).